A 260-amino-acid polypeptide reads, in one-letter code: UPF0246 protein Bphyt_1375 (260 aa).

Belongs to the UPF0246 family.

This is UPF0246 protein Bphyt_1375 from Paraburkholderia phytofirmans (strain DSM 17436 / LMG 22146 / PsJN) (Burkholderia phytofirmans).